The sequence spans 202 residues: Apolipoprotein R (202 aa).

The first 28 residues, Met1–Cys28, serve as a signal peptide directing secretion. 2 Sushi domains span residues Gly29–Ala87 and Leu88–Trp145. Cystine bridges form between Cys30–Cys73, Cys59–Cys85, Cys89–Cys130, and Cys116–Cys143.

As to quaternary structure, forms high molecular weight disulfide-linked complexes. In terms of tissue distribution, plasma. Found on very low-density lipoprotein (VLDL), on chylomicrons, and in the D &gt; 1.21 g/ml fraction of pig plasma. Found in liver, spleen, lung, bone marrow and lymph node.

It localises to the secreted. Functionally, may be a lipoprotein-borne regulator of either the coagulation or the complement cascades. The chain is Apolipoprotein R (APOR) from Sus scrofa (Pig).